A 537-amino-acid polypeptide reads, in one-letter code: uncharacterized protein (537 aa).

The signal sequence occupies residues 1–15 (MALFQLFSFLNVTLG). 2 consecutive transmembrane segments (helical) span residues 459–479 (VLFS…GCCF) and 490–510 (VILL…LGFT).

The protein resides in the host membrane. This is an uncharacterized protein from Citrus sinensis (Sweet orange).